The chain runs to 503 residues: Probable cytosol aminopeptidase (503 aa).

Mn(2+) contacts are provided by Lys-270 and Asp-275. Residue Lys-282 is part of the active site. Mn(2+)-binding residues include Asp-293, Asp-352, and Glu-354. The active site involves Arg-356.

The protein belongs to the peptidase M17 family. The cofactor is Mn(2+).

The protein localises to the cytoplasm. The enzyme catalyses Release of an N-terminal amino acid, Xaa-|-Yaa-, in which Xaa is preferably Leu, but may be other amino acids including Pro although not Arg or Lys, and Yaa may be Pro. Amino acid amides and methyl esters are also readily hydrolyzed, but rates on arylamides are exceedingly low.. It catalyses the reaction Release of an N-terminal amino acid, preferentially leucine, but not glutamic or aspartic acids.. In terms of biological role, presumably involved in the processing and regular turnover of intracellular proteins. Catalyzes the removal of unsubstituted N-terminal amino acids from various peptides. The protein is Probable cytosol aminopeptidase of Shigella dysenteriae serotype 1 (strain Sd197).